Here is a 148-residue protein sequence, read N- to C-terminus: 3-hydroxyacyl-[acyl-carrier-protein] dehydratase FabZ (148 aa).

Histidine 55 is a catalytic residue.

The protein belongs to the thioester dehydratase family. FabZ subfamily.

Its subcellular location is the cytoplasm. It catalyses the reaction a (3R)-hydroxyacyl-[ACP] = a (2E)-enoyl-[ACP] + H2O. Functionally, involved in unsaturated fatty acids biosynthesis. Catalyzes the dehydration of short chain beta-hydroxyacyl-ACPs and long chain saturated and unsaturated beta-hydroxyacyl-ACPs. The sequence is that of 3-hydroxyacyl-[acyl-carrier-protein] dehydratase FabZ from Haemophilus influenzae (strain PittEE).